Consider the following 487-residue polypeptide: 1,4-beta-D-glucan cellobiohydrolase CEL6A (487 aa).

The signal sequence occupies residues 1–17 (MASKLFLAAALLQGALS). The CBM1 domain maps to 27–63 (ACAAQWGQCGGQDYTGPTCCQSGSTCVVSNQWYSQCL). Intrachain disulfides connect Cys35–Cys52 and Cys46–Cys62. Residues 64–117 (PGSSNPTTTSRTSTSSSSSTSRTSSSTSRPPSSVPTTPTSVPPTITTTPTTTPT) are compositionally biased toward low complexity. A disordered region spans residues 64-127 (PGSSNPTTTS…GGSGPGTTAS (64 aa)). Trp175 and Asp177 together coordinate substrate. Asp216 is a catalytic residue. The active-site Proton donor is Asp262. Substrate-binding residues include His307, Trp310, Asn346, Trp407, Lys435, and Glu439. The active-site Proton acceptor is Asp441.

Belongs to the glycosyl hydrolase 6 (cellulase B) family.

It is found in the secreted. The enzyme catalyses Hydrolysis of (1-&gt;4)-beta-D-glucosidic linkages in cellulose and cellotetraose, releasing cellobiose from the non-reducing ends of the chains.. Its function is as follows. Exoglucanase that plays an important function in biomass degradation by catalyzing the hydrolysis of the non-reducing end beta-1,4-glucosidic linkages in cellulose and cellotetraose to release cellobiose. Shows higher hydrolytic activities on phosphoric acid-swollen cellulose (PSC), beta-glucan, and cellooligosaccharide derivatives than on cellulose, of which the best substrates were cellooligosaccharides. This chain is 1,4-beta-D-glucan cellobiohydrolase CEL6A, found in Pyricularia oryzae (strain 70-15 / ATCC MYA-4617 / FGSC 8958) (Rice blast fungus).